A 100-amino-acid chain; its full sequence is Replication restart protein PriB (100 aa).

The region spanning methionine 1–lysine 99 is the SSB domain.

This sequence belongs to the PriB family. Homodimer. Interacts with PriA and DnaT. Component of the replication restart primosome. Primosome assembly occurs via a 'hand-off' mechanism. PriA binds to replication forks, subsequently PriB then DnaT bind; DnaT then displaces ssDNA to generate the helicase loading substrate.

Functionally, involved in the restart of stalled replication forks, which reloads the replicative helicase on sites other than the origin of replication; the PriA-PriB pathway is the major replication restart pathway. During primosome assembly it facilitates complex formation between PriA and DnaT on DNA; stabilizes PriA on DNA. Stimulates the DNA unwinding activity of PriA helicase. The polypeptide is Replication restart protein PriB (Neisseria meningitidis serogroup A / serotype 4A (strain DSM 15465 / Z2491)).